The chain runs to 523 residues: Translation initiation factor eIF2B subunit delta (523 aa).

A disordered region spans residues 1–147; that stretch reads MAAVAVAVRE…PSGVKRLPEY (147 aa). N-acetylalanine is present on Ala2. Ser12 carries the phosphoserine modification. Basic and acidic residues predominate over residues 30-40; it reads EMTKEEKLQLR. Positions 41–51 are enriched in basic residues; that stretch reads KEKKQQKKKRK. Thr86 bears the Phosphothreonine mark. A compositionally biased stretch (basic and acidic residues) spans 87-121; sequence PREKVPAGRSKAELRAERRAKQEAERALKQARKGE. A Phosphoserine modification is found at Ser130. Residues 170–179 form a may bind the chemical integrated stress response (ISR) inhibitor ISRIB region; sequence RKDYGSKVSL.

Belongs to the eIF-2B alpha/beta/delta subunits family. As to quaternary structure, component of the translation initiation factor 2B (eIF2B) complex which is a heterodecamer of two sets of five different subunits: alpha, beta, gamma, delta and epsilon. Subunits alpha, beta and delta comprise a regulatory subcomplex and subunits epsilon and gamma comprise a catalytic subcomplex. Within the complex, the hexameric regulatory complex resides at the center, with the two heterodimeric catalytic subcomplexes bound on opposite sides.

The protein resides in the cytoplasm. Its subcellular location is the cytosol. Its activity is regulated as follows. Activated by the chemical integrated stress response (ISR) inhibitor ISRIB which stimulates guanine nucleotide exchange factor activity for both phosphorylated and unphosphorylated eIF2. Functionally, acts as a component of the translation initiation factor 2B (eIF2B) complex, which catalyzes the exchange of GDP for GTP on eukaryotic initiation factor 2 (eIF2) gamma subunit. Its guanine nucleotide exchange factor activity is repressed when bound to eIF2 complex phosphorylated on the alpha subunit, thereby limiting the amount of methionyl-initiator methionine tRNA available to the ribosome and consequently global translation is repressed. This Homo sapiens (Human) protein is Translation initiation factor eIF2B subunit delta (EIF2B4).